Here is a 244-residue protein sequence, read N- to C-terminus: NAD reductase coq12 (244 aa).

The tract at residues 131–158 is disordered; the sequence is NPLMNSEKNSTSVEDLPGSNRTQQTSSH. The segment covering 132–158 has biased composition (polar residues); that stretch reads PLMNSEKNSTSVEDLPGSNRTQQTSSH.

Its subcellular location is the mitochondrion. It carries out the reaction a reduced flavin + NAD(+) = an oxidized flavin + NADH + 2 H(+). Functionally, NADH-dependent flavin reductase that acts in the coenzyme Q biosynthetic pathway. Required for synthesis of the p-hydroxybenzoic acid (PHB) precursor to form a quinone backbone. The polypeptide is NAD reductase coq12 (Schizosaccharomyces pombe (strain 972 / ATCC 24843) (Fission yeast)).